A 104-amino-acid polypeptide reads, in one-letter code: Protein U9 (104 aa).

This Homo sapiens (Human) protein is Protein U9 (U9).